The primary structure comprises 126 residues: Small ribosomal subunit protein uS8 (126 aa).

The protein belongs to the universal ribosomal protein uS8 family. Part of the 30S ribosomal subunit. Contacts proteins S5 and S12.

Its function is as follows. One of the primary rRNA binding proteins, it binds directly to 16S rRNA central domain where it helps coordinate assembly of the platform of the 30S subunit. This is Small ribosomal subunit protein uS8 from Oleidesulfovibrio alaskensis (strain ATCC BAA-1058 / DSM 17464 / G20) (Desulfovibrio alaskensis).